The sequence spans 78 residues: Beta sliding clamp (78 aa).

This sequence belongs to the beta sliding clamp family. In terms of assembly, forms a ring-shaped head-to-tail homodimer around DNA which binds and tethers DNA polymerases and other proteins to the DNA. The DNA replisome complex has a single clamp-loading complex (3 tau and 1 each of delta, delta', psi and chi subunits) which binds 3 Pol III cores (1 core on the leading strand and 2 on the lagging strand) each with a beta sliding clamp dimer. Additional proteins in the replisome are other copies of gamma, psi and chi, Ssb, DNA helicase and RNA primase.

Its subcellular location is the cytoplasm. In terms of biological role, confers DNA tethering and processivity to DNA polymerases and other proteins. Acts as a clamp, forming a ring around DNA (a reaction catalyzed by the clamp-loading complex) which diffuses in an ATP-independent manner freely and bidirectionally along dsDNA. Initially characterized for its ability to contact the catalytic subunit of DNA polymerase III (Pol III), a complex, multichain enzyme responsible for most of the replicative synthesis in bacteria; Pol III exhibits 3'-5' exonuclease proofreading activity. The beta chain is required for initiation of replication as well as for processivity of DNA replication. The sequence is that of Beta sliding clamp (dnaN) from Serratia marcescens.